The following is a 57-amino-acid chain: uncharacterized protein (57 aa).

Residues 34 to 54 (AALLDAAALVVIPGLLTAAAV) form a helical membrane-spanning segment.

The protein localises to the membrane. This is an uncharacterized protein from Dictyostelium discoideum (Social amoeba).